A 256-amino-acid chain; its full sequence is Ras-related protein RabJ (256 aa).

16–23 (GSSDVGKT) provides a ligand contact to GTP. The Effector region motif lies at 38–46 (LTSTIGASF). Residues 64–68 (DSAGQ) and 122–125 (NKID) each bind GTP. Residues 229-256 (NGHLQGSINGHNNQNSTNYSDNSDQCCG) are disordered. Residues 230-256 (GHLQGSINGHNNQNSTNYSDNSDQCCG) are compositionally biased toward polar residues. 2 S-geranylgeranyl cysteine lipidation sites follow: Cys254 and Cys255.

The protein belongs to the small GTPase superfamily. Rab family.

It is found in the cell membrane. This chain is Ras-related protein RabJ (rabJ), found in Dictyostelium discoideum (Social amoeba).